The primary structure comprises 726 residues: Prolyl endopeptidase-like (726 aa).

Serine 138 is modified (phosphoserine). Residues serine 558, aspartate 644, and histidine 689 each act as charge relay system in the active site.

Belongs to the peptidase S9A family. Homodimer. Interacts with the AP-1 complex.

The protein localises to the cytoplasm. Its subcellular location is the cytosol. The protein resides in the golgi apparatus. It localises to the trans-Golgi network. It is found in the cytoskeleton. The protein localises to the nucleus. Serine peptidase whose precise substrate specificity remains unclear. Does not cleave peptides after a arginine or lysine residue. Regulates trans-Golgi network morphology and sorting by regulating the membrane binding of the AP-1 complex. May play a role in the regulation of synaptic vesicle exocytosis. This is Prolyl endopeptidase-like (Prepl) from Rattus norvegicus (Rat).